The sequence spans 422 residues: NADH-quinone oxidoreductase subunit F (422 aa).

Residues 1-26 (MLKEEDKIFTNLHGQQSHDLKSSKKR) form a disordered region. Residues 16-26 (QSHDLKSSKKR) are compositionally biased toward basic and acidic residues. Position 54-63 (54-63 (GRGGAGFSTG)) interacts with NAD(+). 166-213 (GAGAYICGEETALLESLEGKKGMPRLKPPFPAGFGLYGCPTTINNVES) contributes to the FMN binding site. [4Fe-4S] cluster contacts are provided by Cys-344, Cys-347, Cys-350, and Cys-390.

Belongs to the complex I 51 kDa subunit family. Requires FMN as cofactor. [4Fe-4S] cluster is required as a cofactor.

The catalysed reaction is a quinone + NADH + 5 H(+)(in) = a quinol + NAD(+) + 4 H(+)(out). NDH-1 shuttles electrons from NADH, via FMN and iron-sulfur (Fe-S) centers, to quinones in the respiratory chain. Couples the redox reaction to proton translocation (for every two electrons transferred, four hydrogen ions are translocated across the cytoplasmic membrane), and thus conserves the redox energy in a proton gradient. The protein is NADH-quinone oxidoreductase subunit F (nuoF) of Rickettsia felis (strain ATCC VR-1525 / URRWXCal2) (Rickettsia azadi).